The chain runs to 376 residues: Queuine tRNA-ribosyltransferase (376 aa).

The active-site Proton acceptor is the Asp93. Residues 93–97, Asp147, Gln190, and Gly217 contribute to the substrate site; that span reads DSGGF. The tract at residues 248 to 254 is RNA binding; sequence GVGTPDD. Asp267 acts as the Nucleophile in catalysis. The tract at residues 272–276 is RNA binding; important for wobble base 34 recognition; the sequence is TRSGR.

It belongs to the queuine tRNA-ribosyltransferase family. Homodimer. Within each dimer, one monomer is responsible for RNA recognition and catalysis, while the other monomer binds to the replacement base PreQ1.

It catalyses the reaction 7-aminomethyl-7-carbaguanine + guanosine(34) in tRNA = 7-aminomethyl-7-carbaguanosine(34) in tRNA + guanine. The protein operates within tRNA modification; tRNA-queuosine biosynthesis. Catalyzes the base-exchange of a guanine (G) residue with the queuine precursor 7-aminomethyl-7-deazaguanine (PreQ1) at position 34 (anticodon wobble position) in tRNAs with GU(N) anticodons (tRNA-Asp, -Asn, -His and -Tyr). Catalysis occurs through a double-displacement mechanism. The nucleophile active site attacks the C1' of nucleotide 34 to detach the guanine base from the RNA, forming a covalent enzyme-RNA intermediate. The proton acceptor active site deprotonates the incoming PreQ1, allowing a nucleophilic attack on the C1' of the ribose to form the product. After dissociation, two additional enzymatic reactions on the tRNA convert PreQ1 to queuine (Q), resulting in the hypermodified nucleoside queuosine (7-(((4,5-cis-dihydroxy-2-cyclopenten-1-yl)amino)methyl)-7-deazaguanosine). This is Queuine tRNA-ribosyltransferase from Rhizobium meliloti (strain 1021) (Ensifer meliloti).